An 81-amino-acid chain; its full sequence is uncharacterized protein (81 aa).

The disordered stretch occupies residues 1–58 (MPQSKQQFKRQGARQRDSKGKFVKARTGMATAPPAAVSTAAPTASTMTPTGSSTTATI). A compositionally biased stretch (low complexity) spans 30-58 (ATAPPAAVSTAAPTASTMTPTGSSTTATI).

This is an uncharacterized protein from Caenorhabditis elegans.